A 354-amino-acid chain; its full sequence is DNA integrity scanning protein DisA (354 aa).

The DAC domain maps to 6 to 144; the sequence is GIGIKNVLKI…GDIKYVLRES (139 aa). ATP contacts are provided by residues glycine 73, leucine 91, and 104–108; that span reads TRHRT.

This sequence belongs to the DisA family. Homooctamer. Mg(2+) serves as cofactor.

The catalysed reaction is 2 ATP = 3',3'-c-di-AMP + 2 diphosphate. Functionally, participates in a DNA-damage check-point that is active prior to asymmetric division when DNA is damaged. DisA forms globular foci that rapidly scan along the chromosomes during sporulation, searching for lesions. When a lesion is present, DisA pauses at the lesion site. This triggers a cellular response that culminates in a temporary block in sporulation initiation. In terms of biological role, also has diadenylate cyclase activity, catalyzing the condensation of 2 ATP molecules into cyclic di-AMP (c-di-AMP). c-di-AMP acts as a signaling molecule that couples DNA integrity with progression of sporulation. The rise in c-di-AMP level generated by DisA while scanning the chromosome, operates as a positive signal that advances sporulation; upon encountering a lesion, the DisA focus arrests at the damaged site and halts c-di-AMP synthesis. This is DNA integrity scanning protein DisA from Clostridium beijerinckii (strain ATCC 51743 / NCIMB 8052) (Clostridium acetobutylicum).